A 340-amino-acid chain; its full sequence is Uroporphyrinogen decarboxylase (340 aa).

Residues 21–25, Phe-40, Asp-71, Tyr-146, Ser-201, and His-316 each bind substrate; that span reads RQAGR.

The protein belongs to the uroporphyrinogen decarboxylase family. As to quaternary structure, homodimer.

The protein resides in the cytoplasm. It catalyses the reaction uroporphyrinogen III + 4 H(+) = coproporphyrinogen III + 4 CO2. The protein operates within porphyrin-containing compound metabolism; protoporphyrin-IX biosynthesis; coproporphyrinogen-III from 5-aminolevulinate: step 4/4. In terms of biological role, catalyzes the decarboxylation of four acetate groups of uroporphyrinogen-III to yield coproporphyrinogen-III. This is Uroporphyrinogen decarboxylase from Rickettsia bellii (strain RML369-C).